A 300-amino-acid chain; its full sequence is NAD kinase (300 aa).

D75 serves as the catalytic Proton acceptor. NAD(+)-binding positions include 75 to 76, 149 to 150, R177, D179, 190 to 195, A214, and Q248; these read DG, ND, and TAYALS.

This sequence belongs to the NAD kinase family. Requires a divalent metal cation as cofactor.

The protein localises to the cytoplasm. It carries out the reaction NAD(+) + ATP = ADP + NADP(+) + H(+). In terms of biological role, involved in the regulation of the intracellular balance of NAD and NADP, and is a key enzyme in the biosynthesis of NADP. Catalyzes specifically the phosphorylation on 2'-hydroxyl of the adenosine moiety of NAD to yield NADP. This Burkholderia vietnamiensis (strain G4 / LMG 22486) (Burkholderia cepacia (strain R1808)) protein is NAD kinase.